A 298-amino-acid polypeptide reads, in one-letter code: Small ribosomal subunit protein uS2 (298 aa).

Belongs to the universal ribosomal protein uS2 family.

The sequence is that of Small ribosomal subunit protein uS2 from Leifsonia xyli subsp. xyli (strain CTCB07).